Here is a 96-residue protein sequence, read N- to C-terminus: Protein Vpr (96 aa).

The homooligomerization stretch occupies residues 1-42 (MEQAPEDQGPQREPYNQWALELLEELKNEAVRHFPRIWLHGL). Phosphoserine; by host occurs at positions 79, 94, and 96.

It belongs to the HIV-1 VPR protein family. As to quaternary structure, homooligomer, may form homodimer. Interacts with p6-gag region of the Pr55 Gag precursor protein through a (Leu-X-X)4 motif near the C-terminus of the P6gag protein. Interacts with host UNG. May interact with host RAD23A/HHR23A. Interacts with host VPRBP/DCAF1, leading to hijack the CUL4A-RBX1-DDB1-DCAF1/VPRBP complex, mediating ubiquitination of host proteins such as TERT and ZGPAT and arrest of the cell cycle in G2 phase. Post-translationally, phosphorylated on several residues by host. These phosphorylations regulate VPR activity for the nuclear import of the HIV-1 pre-integration complex.

It is found in the virion. Its subcellular location is the host nucleus. It localises to the host extracellular space. Functionally, during virus replication, may deplete host UNG protein, and incude G2-M cell cycle arrest. Acts by targeting specific host proteins for degradation by the 26S proteasome, through association with the cellular CUL4A-DDB1 E3 ligase complex by direct interaction with host VPRPB/DCAF-1. Cell cycle arrest reportedly occurs within hours of infection and is not blocked by antiviral agents, suggesting that it is initiated by the VPR carried into the virion. Additionally, VPR induces apoptosis in a cell cycle dependent manner suggesting that these two effects are mechanistically linked. Detected in the serum and cerebrospinal fluid of AIDS patient, VPR may also induce cell death to bystander cells. Its function is as follows. During virus entry, plays a role in the transport of the viral pre-integration (PIC) complex to the host nucleus. This function is crucial for viral infection of non-dividing macrophages. May act directly at the nuclear pore complex, by binding nucleoporins phenylalanine-glycine (FG)-repeat regions. The polypeptide is Protein Vpr (Human immunodeficiency virus type 1 group M subtype B (isolate MN) (HIV-1)).